A 129-amino-acid chain; its full sequence is Small ribosomal subunit protein uS11 (129 aa).

The protein belongs to the universal ribosomal protein uS11 family. As to quaternary structure, part of the 30S ribosomal subunit. Interacts with proteins S7 and S18. Binds to IF-3.

Located on the platform of the 30S subunit, it bridges several disparate RNA helices of the 16S rRNA. Forms part of the Shine-Dalgarno cleft in the 70S ribosome. The chain is Small ribosomal subunit protein uS11 from Bacillus anthracis (strain A0248).